The following is a 137-amino-acid chain: Cell division protein SepF (137 aa).

This sequence belongs to the SepF family. Homodimer. Interacts with FtsZ.

It is found in the cytoplasm. Functionally, cell division protein that is part of the divisome complex and is recruited early to the Z-ring. Probably stimulates Z-ring formation, perhaps through the cross-linking of FtsZ protofilaments. Its function overlaps with FtsA. This Thermoanaerobacter pseudethanolicus (strain ATCC 33223 / 39E) (Clostridium thermohydrosulfuricum) protein is Cell division protein SepF.